Reading from the N-terminus, the 626-residue chain is Threonine--tRNA ligase (626 aa).

Residues 1–145 are editing domain; the sequence is MRMLLIHSDY…SRTIVPEKAV (145 aa). Residues 207–506 are catalytic; the sequence is PHVRLMLEQE…QEKGIKPMYP (300 aa). 3 residues coordinate Zn(2+): Cys-299, His-351, and His-475.

The protein belongs to the class-II aminoacyl-tRNA synthetase family. As to quaternary structure, homodimer. Zn(2+) serves as cofactor.

It is found in the cytoplasm. It carries out the reaction tRNA(Thr) + L-threonine + ATP = L-threonyl-tRNA(Thr) + AMP + diphosphate + H(+). Its function is as follows. Catalyzes the attachment of threonine to tRNA(Thr) in a two-step reaction: L-threonine is first activated by ATP to form Thr-AMP and then transferred to the acceptor end of tRNA(Thr). Also edits incorrectly charged L-seryl-tRNA(Thr). This is Threonine--tRNA ligase from Thermococcus kodakarensis (strain ATCC BAA-918 / JCM 12380 / KOD1) (Pyrococcus kodakaraensis (strain KOD1)).